Here is a 336-residue protein sequence, read N- to C-terminus: Holliday junction branch migration complex subunit RuvB (336 aa).

The tract at residues 1–182 (MKERIVNLET…FGMSFRMQFY (182 aa)) is large ATPase domain (RuvB-L). Residues Leu21, Arg22, Gly63, Lys66, Thr67, Ser68, 129–131 (EDF), Arg172, Tyr182, and Arg219 contribute to the ATP site. Thr67 provides a ligand contact to Mg(2+). A small ATPAse domain (RuvB-S) region spans residues 183-253 (SPSELALIIK…ITLHALNELG (71 aa)). The interval 256-336 (ELGFDEADLA…IPTLKSQTLF (81 aa)) is head domain (RuvB-H). Arg310 and Arg315 together coordinate DNA.

It belongs to the RuvB family. Homohexamer. Forms an RuvA(8)-RuvB(12)-Holliday junction (HJ) complex. HJ DNA is sandwiched between 2 RuvA tetramers; dsDNA enters through RuvA and exits via RuvB. An RuvB hexamer assembles on each DNA strand where it exits the tetramer. Each RuvB hexamer is contacted by two RuvA subunits (via domain III) on 2 adjacent RuvB subunits; this complex drives branch migration. In the full resolvosome a probable DNA-RuvA(4)-RuvB(12)-RuvC(2) complex forms which resolves the HJ.

It is found in the cytoplasm. The enzyme catalyses ATP + H2O = ADP + phosphate + H(+). In terms of biological role, the RuvA-RuvB-RuvC complex processes Holliday junction (HJ) DNA during genetic recombination and DNA repair, while the RuvA-RuvB complex plays an important role in the rescue of blocked DNA replication forks via replication fork reversal (RFR). RuvA specifically binds to HJ cruciform DNA, conferring on it an open structure. The RuvB hexamer acts as an ATP-dependent pump, pulling dsDNA into and through the RuvAB complex. RuvB forms 2 homohexamers on either side of HJ DNA bound by 1 or 2 RuvA tetramers; 4 subunits per hexamer contact DNA at a time. Coordinated motions by a converter formed by DNA-disengaged RuvB subunits stimulates ATP hydrolysis and nucleotide exchange. Immobilization of the converter enables RuvB to convert the ATP-contained energy into a lever motion, pulling 2 nucleotides of DNA out of the RuvA tetramer per ATP hydrolyzed, thus driving DNA branch migration. The RuvB motors rotate together with the DNA substrate, which together with the progressing nucleotide cycle form the mechanistic basis for DNA recombination by continuous HJ branch migration. Branch migration allows RuvC to scan DNA until it finds its consensus sequence, where it cleaves and resolves cruciform DNA. This chain is Holliday junction branch migration complex subunit RuvB, found in Helicobacter pylori (strain HPAG1).